A 152-amino-acid polypeptide reads, in one-letter code: Deoxyuridine 5'-triphosphate nucleotidohydrolase (152 aa).

Substrate is bound by residues 71 to 73 (RSG), N84, 88 to 90 (LID), and M98.

Belongs to the dUTPase family. The cofactor is Mg(2+).

The enzyme catalyses dUTP + H2O = dUMP + diphosphate + H(+). The protein operates within pyrimidine metabolism; dUMP biosynthesis; dUMP from dCTP (dUTP route): step 2/2. Its function is as follows. This enzyme is involved in nucleotide metabolism: it produces dUMP, the immediate precursor of thymidine nucleotides and it decreases the intracellular concentration of dUTP so that uracil cannot be incorporated into DNA. In Coxiella burnetii (strain RSA 331 / Henzerling II), this protein is Deoxyuridine 5'-triphosphate nucleotidohydrolase.